We begin with the raw amino-acid sequence, 855 residues long: DNA mismatch repair protein MutS (855 aa).

616–623 (GPNMGGKS) lines the ATP pocket.

Belongs to the DNA mismatch repair MutS family.

Functionally, this protein is involved in the repair of mismatches in DNA. It is possible that it carries out the mismatch recognition step. This protein has a weak ATPase activity. In Salmonella paratyphi A (strain ATCC 9150 / SARB42), this protein is DNA mismatch repair protein MutS.